The following is a 238-amino-acid chain: Isoamyl acetate-hydrolyzing esterase (238 aa).

The active-site Nucleophile is S12. D187 functions as the Proton donor in the catalytic mechanism. Residue H190 is the Proton acceptor of the active site.

This sequence belongs to the 'GDSL' lipolytic enzyme family. IAH1 subfamily. As to quaternary structure, homodimer.

The catalysed reaction is 3-methylbutyl acetate + H2O = 3-methylbutanol + acetate + H(+). Its function is as follows. Plays a crucial role in the hydrolysis of isoamyl acetate in sake mash. Hydrolyzes short chain esters from acetate (C2) to hexanoate (C6), showing more specificity for shorter chain exters. No activity for decanoate (C10) esters. In Saccharomyces cerevisiae (strain ATCC 204508 / S288c) (Baker's yeast), this protein is Isoamyl acetate-hydrolyzing esterase.